The following is a 674-amino-acid chain: Kelch repeat and BTB domain-containing protein 6 (674 aa).

The disordered stretch occupies residues 1–28; it reads MQSREDAPRSRRLASPRGGKRPKKIHKP. Residues 10-27 are compositionally biased toward basic residues; sequence SRRLASPRGGKRPKKIHK. The 76-residue stretch at 63 to 138 folds into the BTB domain; it reads CDVTIEVVTP…CYTGRVSLSE (76 aa). 6 Kelch repeats span residues 386-435, 436-484, 486-523, 524-564, 567-616, and 642-673; these read AVCI…YLNG, YIYI…VIRD, LYALNSKRMFCYDPSHNMWLKCVSLKRNDFQEACVFNE, EIYC…IIKH, KLLL…CLSA, and TEWDLGGFSEPDSESGSSSSLSDDDFWVRVAP. The disordered stretch occupies residues 631–674; sequence TEEEEIPSESSTEWDLGGFSEPDSESGSSSSLSDDDFWVRVAPQ. An ATG8 interaction motif (AIM) motif is present at residues 668–671; that stretch reads WVRV.

In terms of assembly, core component of a BCR3 (BTB-CUL3-RBX1) E3 ubiquitin ligase complex, also named Cul3-RING ubiquitin ligase complex CUL3(KBTBD6/7), composed of CUL3, RBX1, KBTBD6 and KBTBD7. Interacts with GABARAP; the interaction is direct and is required for the ubiquitination of TIAM1. Interacts with GABARAPL1, GABARAPL2 and MAP1LC3B; the interaction is direct.

It localises to the cytoplasm. The protein resides in the nucleus. The protein operates within protein modification; protein ubiquitination. In terms of biological role, as part of the CUL3(KBTBD6/7) E3 ubiquitin ligase complex functions as a substrate adapter for the RAC1 guanine exchange factor (GEF) TIAM1, mediating its 'Lys-48' ubiquitination and proteasomal degradation. By controlling this ubiquitination, regulates RAC1 signal transduction and downstream biological processes including the organization of the cytoskeleton, cell migration and cell proliferation. Ubiquitination of TIAM1 requires the membrane-associated protein GABARAP which may restrict locally the activity of the complex. In Homo sapiens (Human), this protein is Kelch repeat and BTB domain-containing protein 6.